The chain runs to 453 residues: uncharacterized protein (453 aa).

Residues C74, C80, C83, and C162 each contribute to the [4Fe-4S] cluster site. Residues Q286, Y315, E336, and D384 each contribute to the S-adenosyl-L-methionine site. The active-site Nucleophile is C411.

This sequence belongs to the class I-like SAM-binding methyltransferase superfamily. RNA M5U methyltransferase family.

This is an uncharacterized protein from Staphylococcus aureus (strain COL).